We begin with the raw amino-acid sequence, 238 residues long: Chloride intracellular channel exl-1 (238 aa).

The protein belongs to the chloride channel CLIC family. Expressed in the intestine, neurons and muscles.

It is found in the cytoplasm. The protein resides in the membrane. The protein localises to the lysosome membrane. Its subcellular location is the golgi apparatus membrane. Probable chloride channel. In Caenorhabditis elegans, this protein is Chloride intracellular channel exl-1 (exl-1).